The primary structure comprises 341 residues: tRNA N6-adenosine threonylcarbamoyltransferase (341 aa).

Fe cation-binding residues include His114 and His118. Substrate is bound by residues 136 to 140, Asp169, Gly182, Asp186, and Asn278; that span reads LVSGG. Asp304 lines the Fe cation pocket.

Belongs to the KAE1 / TsaD family. It depends on Fe(2+) as a cofactor.

It localises to the cytoplasm. The catalysed reaction is L-threonylcarbamoyladenylate + adenosine(37) in tRNA = N(6)-L-threonylcarbamoyladenosine(37) in tRNA + AMP + H(+). Functionally, required for the formation of a threonylcarbamoyl group on adenosine at position 37 (t(6)A37) in tRNAs that read codons beginning with adenine. Is involved in the transfer of the threonylcarbamoyl moiety of threonylcarbamoyl-AMP (TC-AMP) to the N6 group of A37, together with TsaE and TsaB. TsaD likely plays a direct catalytic role in this reaction. This is tRNA N6-adenosine threonylcarbamoyltransferase from Lactococcus lactis subsp. cremoris (strain SK11).